We begin with the raw amino-acid sequence, 51 residues long: Large ribosomal subunit protein bL33 (51 aa).

Belongs to the bacterial ribosomal protein bL33 family.

The chain is Large ribosomal subunit protein bL33 from Alteromonas mediterranea (strain DSM 17117 / CIP 110805 / LMG 28347 / Deep ecotype).